We begin with the raw amino-acid sequence, 542 residues long: Phosphoenolpyruvate carboxykinase (ATP) (542 aa).

Substrate is bound by residues arginine 67, tyrosine 208, and lysine 214. Residues lysine 214, histidine 233, and 249-257 (GLSGTGKTT) each bind ATP. Positions 214 and 233 each coordinate Mn(2+). Position 270 (aspartate 270) interacts with Mn(2+). ATP-binding positions include glutamate 298, arginine 334, 450–451 (RI), and threonine 456. Arginine 334 is a substrate binding site.

The protein belongs to the phosphoenolpyruvate carboxykinase (ATP) family. In terms of assembly, monomer. The cofactor is Mn(2+).

The protein localises to the cytoplasm. It carries out the reaction oxaloacetate + ATP = phosphoenolpyruvate + ADP + CO2. It functions in the pathway carbohydrate biosynthesis; gluconeogenesis. Involved in the gluconeogenesis. Catalyzes the conversion of oxaloacetate (OAA) to phosphoenolpyruvate (PEP) through direct phosphoryl transfer between the nucleoside triphosphate and OAA. This is Phosphoenolpyruvate carboxykinase (ATP) from Vibrio campbellii (strain ATCC BAA-1116).